Here is a 280-residue protein sequence, read N- to C-terminus: Ribosomal RNA small subunit methyltransferase A (280 aa).

Asn-28, Leu-30, Gly-55, Glu-77, Asp-103, and Asn-122 together coordinate S-adenosyl-L-methionine.

The protein belongs to the class I-like SAM-binding methyltransferase superfamily. rRNA adenine N(6)-methyltransferase family. RsmA subfamily.

It is found in the cytoplasm. The enzyme catalyses adenosine(1518)/adenosine(1519) in 16S rRNA + 4 S-adenosyl-L-methionine = N(6)-dimethyladenosine(1518)/N(6)-dimethyladenosine(1519) in 16S rRNA + 4 S-adenosyl-L-homocysteine + 4 H(+). In terms of biological role, specifically dimethylates two adjacent adenosines (A1518 and A1519) in the loop of a conserved hairpin near the 3'-end of 16S rRNA in the 30S particle. May play a critical role in biogenesis of 30S subunits. The chain is Ribosomal RNA small subunit methyltransferase A from Roseobacter denitrificans (strain ATCC 33942 / OCh 114) (Erythrobacter sp. (strain OCh 114)).